The following is a 384-amino-acid chain: Lipid-A-disaccharide synthase (384 aa).

Belongs to the LpxB family.

It catalyses the reaction a lipid X + a UDP-2-N,3-O-bis[(3R)-3-hydroxyacyl]-alpha-D-glucosamine = a lipid A disaccharide + UDP + H(+). Its pathway is bacterial outer membrane biogenesis; LPS lipid A biosynthesis. In terms of biological role, condensation of UDP-2,3-diacylglucosamine and 2,3-diacylglucosamine-1-phosphate to form lipid A disaccharide, a precursor of lipid A, a phosphorylated glycolipid that anchors the lipopolysaccharide to the outer membrane of the cell. In Geobacter metallireducens (strain ATCC 53774 / DSM 7210 / GS-15), this protein is Lipid-A-disaccharide synthase.